Consider the following 193-residue polypeptide: uncharacterized protein (193 aa).

The AMMECR1 domain maps to 1–189 (MDKKEYCYYC…CTYEEYLHNL (189 aa)).

This is an uncharacterized protein from Schizosaccharomyces pombe (strain 972 / ATCC 24843) (Fission yeast).